A 384-amino-acid chain; its full sequence is Carbamoyl phosphate synthase small chain (384 aa).

Residues 1-195 (MLPVLPPALL…LGRGHGTLAD (195 aa)) form a CPSase region. L-glutamine is bound by residues Ser-50, Gly-247, and Gly-249. In terms of domain architecture, Glutamine amidotransferase type-1 spans 199-384 (HVVAYDFGVK…RFVALMQERA (186 aa)). Cys-275 functions as the Nucleophile in the catalytic mechanism. The L-glutamine site is built by Leu-276, Gln-279, Asn-317, Gly-319, and Phe-320. Residues His-359 and Glu-361 contribute to the active site.

This sequence belongs to the CarA family. In terms of assembly, composed of two chains; the small (or glutamine) chain promotes the hydrolysis of glutamine to ammonia, which is used by the large (or ammonia) chain to synthesize carbamoyl phosphate. Tetramer of heterodimers (alpha,beta)4.

It catalyses the reaction hydrogencarbonate + L-glutamine + 2 ATP + H2O = carbamoyl phosphate + L-glutamate + 2 ADP + phosphate + 2 H(+). It carries out the reaction L-glutamine + H2O = L-glutamate + NH4(+). Its pathway is amino-acid biosynthesis; L-arginine biosynthesis; carbamoyl phosphate from bicarbonate: step 1/1. It functions in the pathway pyrimidine metabolism; UMP biosynthesis via de novo pathway; (S)-dihydroorotate from bicarbonate: step 1/3. Functionally, small subunit of the glutamine-dependent carbamoyl phosphate synthetase (CPSase). CPSase catalyzes the formation of carbamoyl phosphate from the ammonia moiety of glutamine, carbonate, and phosphate donated by ATP, constituting the first step of 2 biosynthetic pathways, one leading to arginine and/or urea and the other to pyrimidine nucleotides. The small subunit (glutamine amidotransferase) binds and cleaves glutamine to supply the large subunit with the substrate ammonia. The sequence is that of Carbamoyl phosphate synthase small chain from Rubrivivax gelatinosus (strain NBRC 100245 / IL144).